A 465-amino-acid polypeptide reads, in one-letter code: 6-phospho-beta-glucosidase (465 aa).

Glu173 functions as the Proton donor in the catalytic mechanism. Residue Glu362 is the Nucleophile of the active site.

It belongs to the glycosyl hydrolase 1 family.

It carries out the reaction 6-phospho-beta-D-glucosyl-(1-&gt;4)-D-glucose + H2O = D-glucose 6-phosphate + D-glucose. It functions in the pathway carbohydrate metabolism; beta-glucoside metabolism. This is 6-phospho-beta-glucosidase (arbB) from Dickeya chrysanthemi (Pectobacterium chrysanthemi).